The following is a 50-amino-acid chain: Small, acid-soluble spore protein P (50 aa).

The disordered stretch occupies residues 1-50 (MSKRKMGPKQQKNPELPKSPEQPYGEPLSGSKKEKKANHSGQKHNPHHGL). Residues 33 to 50 (KEKKANHSGQKHNPHHGL) show a composition bias toward basic residues.

It belongs to the SspP family.

The protein localises to the spore core. In Oceanobacillus iheyensis (strain DSM 14371 / CIP 107618 / JCM 11309 / KCTC 3954 / HTE831), this protein is Small, acid-soluble spore protein P.